Consider the following 40-residue polypeptide: Photosystem II reaction center protein J (40 aa).

A helical membrane pass occupies residues 8-28 (IPLWLIGTVTGILVIGLIGVF).

The protein belongs to the PsbJ family. PSII is composed of 1 copy each of membrane proteins PsbA, PsbB, PsbC, PsbD, PsbE, PsbF, PsbH, PsbI, PsbJ, PsbK, PsbL, PsbM, PsbT, PsbX, PsbY, PsbZ, Psb30/Ycf12, at least 3 peripheral proteins of the oxygen-evolving complex and a large number of cofactors. It forms dimeric complexes.

It is found in the plastid. It localises to the chloroplast thylakoid membrane. Functionally, one of the components of the core complex of photosystem II (PSII). PSII is a light-driven water:plastoquinone oxidoreductase that uses light energy to abstract electrons from H(2)O, generating O(2) and a proton gradient subsequently used for ATP formation. It consists of a core antenna complex that captures photons, and an electron transfer chain that converts photonic excitation into a charge separation. The sequence is that of Photosystem II reaction center protein J from Nymphaea alba (White water-lily).